A 238-amino-acid chain; its full sequence is Sugar fermentation stimulation protein homolog (238 aa).

It belongs to the SfsA family.

This Pseudoalteromonas translucida (strain TAC 125) protein is Sugar fermentation stimulation protein homolog.